The chain runs to 254 residues: MEWEAPALVLSASPYGESSAIVHLLTEDLGLVHGLARGGTARANRALWQPGNLIRASWRGRLPDQLGNLSGELVHGSAARLMSAPLALAMLASACAVADGTLPEREPHPRIFHLLTRFFSLLSLDPDMAGWGGMAALLRWEACLLGDLGYGMDLSACAVTGGSAELAWVSPRTGRAVSDAAAGEWRPRLLRLPPLFLDESDPGTVQDWRDGLRLTGHFLARDAFGQRHRPLPPARLRLVDMIDALQPGALHPDD.

Belongs to the RecO family.

Involved in DNA repair and RecF pathway recombination. The protein is DNA repair protein RecO of Gluconacetobacter diazotrophicus (strain ATCC 49037 / DSM 5601 / CCUG 37298 / CIP 103539 / LMG 7603 / PAl5).